The sequence spans 660 residues: Nuclear factor erythroid 2-related factor 3 (660 aa).

The interval 120–214 (SAVGDGGQSA…KTEEHKMACA (95 aa)) is disordered. The segment covering 123-135 (GDGGQSASAGGGD) has biased composition (gly residues). 2 stretches are compositionally biased toward basic and acidic residues: residues 173 to 186 (MLREKSEAVDHSSQ) and 204 to 214 (SKTEEHKMACA). One can recognise a bZIP domain in the interval 541 to 604 (LIRDIRRRGK…DIMRQKLHGL (64 aa)). The interval 543–562 (RDIRRRGKNKVAAQNCRKRK) is basic motif. Residues 566-573 (ILNLEDDI) are leucine-zipper.

The protein belongs to the bZIP family. CNC subfamily. As to quaternary structure, heterodimer with MAFG, MAFK and other small MAF proteins that binds to the MAF recognition elements (MARE). High level expression in brain, thymus, testis and placenta. Medium level expression in uterus, stomach and lung. Low level expression in kidney. No expression in heart, liver, spleen and ovary.

Its subcellular location is the nucleus. Its function is as follows. Activates erythroid-specific, globin gene expression. The polypeptide is Nuclear factor erythroid 2-related factor 3 (Nfe2l3) (Mus musculus (Mouse)).